A 59-amino-acid chain; its full sequence is UPF0509 protein YciZ (59 aa).

The protein belongs to the UPF0509 family.

The polypeptide is UPF0509 protein YciZ (Salmonella agona (strain SL483)).